The following is a 225-amino-acid chain: Germin-like protein 8-7 (225 aa).

An N-terminal signal peptide occupies residues 1-23; the sequence is MASPSSFCLLAVLLALVSWQAIA. Cys-33 and Cys-48 form a disulfide bridge. One can recognise a Cupin type-1 domain in the interval 63–213; the sequence is AMLDTPRKTN…AFQVEKGTID (151 aa). Asn-77 carries an N-linked (GlcNAc...) asparagine glycan. Residues His-110, His-112, and Glu-117 each coordinate Mn(2+). An N-linked (GlcNAc...) asparagine glycan is attached at Asn-136. Residue His-158 coordinates Mn(2+).

It belongs to the germin family. Oligomer (believed to be a pentamer but probably hexamer).

It is found in the secreted. Its subcellular location is the extracellular space. The protein resides in the apoplast. Functionally, plays a role in broad-spectrum disease resistance. Probably has no oxalate oxidase activity even if the active site is conserved. This Oryza sativa subsp. japonica (Rice) protein is Germin-like protein 8-7 (GER6).